Consider the following 2377-residue polypeptide: Serine/threonine-protein kinase WNK1 (2377 aa).

Disordered stretches follow at residues 1 to 79 (MSDG…RFFR) and 93 to 203 (LPGL…QQDD). Phosphothreonine is present on residues Thr-17 and Thr-58. The span at 48–64 (RTEEYRRRRHTMDKDSR) shows a compositional bias: basic and acidic residues. Composition is skewed to low complexity over residues 101-111 (PQPSVPAVVPQ) and 127-141 (VASQ…AASP). The span at 149–158 (SATTTVPSST) shows a compositional bias: polar residues. Ser-165 and Ser-172 each carry phosphoserine. One can recognise a Protein kinase domain in the interval 221–479 (LKFDIEIGRG…IKDLLNHAFF (259 aa)). Ser-231 is an ATP binding site. Residues Phe-283 and Leu-299 each contribute to the chloride site. Residues 301–304 (TELM) and Lys-351 contribute to the ATP site. The active-site Proton acceptor is the Asp-368. Chloride contacts are provided by Leu-369 and Leu-371. A phosphoserine; by autocatalysis mark is found at Ser-378 and Ser-382. An autoinhibitory domain region spans residues 488–555 (ELAEEDDGEK…VCEGDHKTMA (68 aa)). The span at 573–588 (QLVREEQEKRKQEESS) shows a compositional bias: basic and acidic residues. 2 disordered regions span residues 573 to 782 (QLVR…SAGT) and 1013 to 1114 (PAVS…SRPK). 3 stretches are compositionally biased toward polar residues: residues 593 to 628 (NEQQ…STQV), 638 to 705 (HQQL…QSQP), and 713 to 733 (SMAQ…VLSS). The interval 629-639 (EPEEPEADQHQ) is interaction with KLHL3. Over residues 734-746 (QPIQHPQQQGIQP) the composition is skewed to low complexity. Residues 747–782 (TVPSQQAVQYSLPQAASSSEGTTAQPVSQPQVSAGT) are compositionally biased toward polar residues. A compositionally biased stretch (low complexity) spans 1018-1028 (TQQPPTTSSQQ). A compositionally biased stretch (polar residues) spans 1029 to 1038 (AVLESTQGVS). Positions 1042–1058 (PPEQTPITQSQPTQPVP) are enriched in low complexity. A compositionally biased stretch (polar residues) spans 1075–1085 (SDGNENAPSSS). The segment covering 1093–1114 (TKRHYRKSVRSRSRHEKTSRPK) has biased composition (basic residues). Positions 1252–1255 (RFIV) match the RFXV motif 1 motif. At Ser-1256 the chain carries Phosphoserine. Disordered stretches follow at residues 1726–1760 (GQVS…TVVP) and 1818–1847 (TMSS…SSGA). Positions 1738–1748 (PVGTATGVKPG) are enriched in low complexity. The residue at position 1843 (Thr-1843) is a Phosphothreonine. An RFXV motif 2 motif is present at residues 1854 to 1857 (RFQV). The tract at residues 1860 to 1945 (TMDDAQKERK…TKVGRFQVTT (86 aa)) is disordered. Residues 1863-1879 (DAQKERKNRSEDTKSVH) are compositionally biased toward basic and acidic residues. The segment covering 1882 to 1900 (SSTSESSVLSSSSPESTLV) has biased composition (low complexity). Short sequence motifs (RFXV motif) lie at residues 1940 to 1943 (RFQV) and 1952 to 1955 (RFSV). Residues 1959–1969 (EDKVTELKKEG) are compositionally biased toward basic and acidic residues. Disordered stretches follow at residues 1959–1984 (EDKV…QTVI), 1989–2008 (PKKE…PSSD), 2015–2064 (SRGT…DIED), 2107–2191 (VIIP…NLYS), and 2203–2239 (SLSA…SRKG). At Ser-1973 the chain carries Phosphoserine. Residues 1989–1998 (PKKEKPELAE) show a composition bias toward basic and acidic residues. Phosphoserine is present on residues Ser-2006, Ser-2007, Ser-2022, Ser-2024, and Ser-2027. A compositionally biased stretch (low complexity) spans 2035 to 2057 (SLPVQNLSQSLSNSFNSSYMSSD). The residue at position 2116 (Ser-2116) is a Phosphoserine. Over residues 2117–2129 (GRRRRPTKSKGSK) the composition is skewed to basic residues. Residues 2130 to 2140 (SSRSSSLGNKS) are compositionally biased toward low complexity. Residues 2141–2191 (PQLSGNLSGQSGTSVLHPQQTLHPAGNTPETGHNQLLQPLKPSPSSDNLYS) are compositionally biased toward polar residues. Over residues 2208–2232 (GQGTSSTNTVGGTVSSQAAQAQPPA) the composition is skewed to low complexity. The segment at 2236–2256 (SRKGTFTDDLHKLVDNWARDA) is amphipathic alpha-helix. A phosphoserine mark is found at Ser-2265 and Ser-2281. The segment at 2325 to 2344 (PAPFGTQWSGTGGPAPQPLG) is disordered. 2 positions are modified to phosphoserine: Ser-2365 and Ser-2367.

Belongs to the protein kinase superfamily. Ser/Thr protein kinase family. WNK subfamily. As to quaternary structure, interacts with WNK3. Interacts with WNK4; inhibiting the activity of WNK4. Interacts with SGK1; promoting its activation. Associates with the mTORC2 complex. Interacts with UVRAG. Interacts with isoform 1; inhibiting isoform 1 activity. Mg(2+) is required as a cofactor. Post-translationally, autophosphorylated at Ser-378 and Ser-382, promoting its activity. Autophosphorylation at Ser-382 is inhibited by intracellular calcium. Phosphorylation at Thr-58 increases ability to activate SGK1. Ubiquitinated by the BCR(KLHL3) complex, leading to its degradation. Also ubiquitinated by the BCR(KLHL2) complex. In terms of processing, may be O-glycosylated. Widely expressed in both adult and embryonic tissue, with highest levels observed in the testis and lower levels in heart, lung, kidney, placenta, brain and skeletal muscle. Expressed in pancreatic duct. Two isoforms are expressed in heart, a single shorter isoform in the kidney. Locates to the distal convoluted tubule, the medullary collecting duct and the cortical collecting duct of the kidney. In terms of tissue distribution, restricted to the nervous system, expressed preferentially in sensory neurons than in motor neurons and in general more abundant in axons than in cell bodies (at protein level). In the DRG, predominantly expressed in the satellite cells that envelop sensory neurons, but low expression also observed in the cell bodies of neurons (at protein level). In the sciatic nerve, expressed in the Schwann cells that surround axons and in a mosaic distribution of axons (at protein level). In the spinal cord, expressed in superficial layers (LI and LII), as well as in the fibers of the Lissauer tract (at protein level). Also detected in the axon fibers of dorsolateral funiculus and lateral funiculus (at protein level).

The protein localises to the cytoplasm. Its subcellular location is the nucleus. The protein resides in the cytoskeleton. It is found in the spindle. It carries out the reaction L-seryl-[protein] + ATP = O-phospho-L-seryl-[protein] + ADP + H(+). It catalyses the reaction L-threonyl-[protein] + ATP = O-phospho-L-threonyl-[protein] + ADP + H(+). Activated in response to hyperosmotic stress: cell shrinkage promotes formation of a membraneless compartment that concentrates WNK1 with its substrates, OXSR1/OSR1 and STK39/SPAK. Activation requires autophosphorylation of Ser-382 and, to a lower extent, Ser-378. Autophosphorylation and subsequent activation is inhibited by increases in intracellular ionic strength: Cl(-) potently inhibits WNK1 kinase activity via direct binding. Also inhibited by K(+) ions. Its function is as follows. Serine/threonine-protein kinase component of the WNK1-SPAK/OSR1 kinase cascade, which acts as a key regulator of blood pressure and regulatory volume increase by promoting ion influx. WNK1 mediates regulatory volume increase in response to hyperosmotic stress by acting as a molecular crowding sensor, which senses cell shrinkage and mediates formation of a membraneless compartment by undergoing liquid-liquid phase separation. The membraneless compartment concentrates WNK1 with its substrates, OXSR1/OSR1 and STK39/SPAK, promoting WNK1-dependent phosphorylation and activation of downstream kinases OXSR1/OSR1 and STK39/SPAK. Following activation, OXSR1/OSR1 and STK39/SPAK catalyze phosphorylation of ion cotransporters SLC12A1/NKCC2, SLC12A2/NKCC1, SLC12A5/KCC2 and SLC12A6/KCC3, regulating their activity. Phosphorylation of Na-K-Cl cotransporters SLC12A2/NKCC1 and SLC12A2/NKCC1 promote their activation and ion influx; simultaneously, phosphorylation of K-Cl cotransporters SLC12A5/KCC2 and SLC12A6/KCC3 inhibit their activity, blocking ion efflux. Also acts as a regulator of angiogenesis in endothelial cells. Also acts independently of the WNK1-SPAK/OSR1 kinase cascade by catalyzing phosphorylation of other substrates, such as SYT2, PCF11 and NEDD4L. Mediates phosphorylation of SYT2, regulating SYT2 association with phospholipids and membrane-binding. Regulates mRNA export in the nucleus by mediating phosphorylation of PCF11, thereby decreasing the association between PCF11 and POLR2A/RNA polymerase II and promoting mRNA export to the cytoplasm. Acts as a negative regulator of autophagy. Required for the abscission step during mitosis, independently of the WNK1-SPAK/OSR1 kinase cascade. WNK1 may also play a role in actin cytoskeletal reorganization. Also acts as a scaffold protein independently of its protein kinase activity: negatively regulates cell membrane localization of various transporters and channels, such as SLC4A4, SLC26A6, SLC26A9, TRPV4 and CFTR. Involved in the regulation of epithelial Na(+) channel (ENaC) by promoting activation of SGK1 in a kinase-independent manner: probably acts as a scaffold protein that promotes the recruitment of SGK1 to the mTORC2 complex in response to chloride, leading to mTORC2-dependent phosphorylation and activation of SGK1. Acts as an assembly factor for the ER membrane protein complex independently of its protein kinase activity: associates with EMC2 in the cytoplasm via its amphipathic alpha-helix, and prevents EMC2 ubiquitination and subsequent degradation, thereby promoting EMC2 stabilization. In terms of biological role, kinase-defective isoform specifically expressed in kidney, which acts as a dominant-negative regulator of the longer isoform 1. Does not directly inhibit WNK4 and has no direct effect on sodium and chloride ion transport. Down-regulates sodium-chloride cotransporter activity indirectly by inhibiting isoform 1, it associates with isoform 1 and attenuates its kinase activity. In kidney, may play an important role regulating sodium and potassium balance. The polypeptide is Serine/threonine-protein kinase WNK1 (Mus musculus (Mouse)).